We begin with the raw amino-acid sequence, 523 residues long: Peptide chain release factor 3 (523 aa).

Residues 10–277 (EKRRTFAIIS…SFVDLAPAPE (268 aa)) enclose the tr-type G domain. Residues 19–26 (SHPDAGKT), 87–91 (DTPGH), and 141–144 (NKLD) each bind GTP.

It belongs to the TRAFAC class translation factor GTPase superfamily. Classic translation factor GTPase family. PrfC subfamily.

It is found in the cytoplasm. Increases the formation of ribosomal termination complexes and stimulates activities of RF-1 and RF-2. It binds guanine nucleotides and has strong preference for UGA stop codons. It may interact directly with the ribosome. The stimulation of RF-1 and RF-2 is significantly reduced by GTP and GDP, but not by GMP. The chain is Peptide chain release factor 3 from Lactobacillus acidophilus (strain ATCC 700396 / NCK56 / N2 / NCFM).